We begin with the raw amino-acid sequence, 179 residues long: Large ribosomal subunit protein uL5 (179 aa).

Belongs to the universal ribosomal protein uL5 family. In terms of assembly, part of the 50S ribosomal subunit; part of the 5S rRNA/L5/L18/L25 subcomplex. Contacts the 5S rRNA and the P site tRNA. Forms a bridge to the 30S subunit in the 70S ribosome.

Its function is as follows. This is one of the proteins that bind and probably mediate the attachment of the 5S RNA into the large ribosomal subunit, where it forms part of the central protuberance. In the 70S ribosome it contacts protein S13 of the 30S subunit (bridge B1b), connecting the 2 subunits; this bridge is implicated in subunit movement. Contacts the P site tRNA; the 5S rRNA and some of its associated proteins might help stabilize positioning of ribosome-bound tRNAs. This is Large ribosomal subunit protein uL5 from Variovorax paradoxus (strain S110).